Consider the following 214-residue polypeptide: LexA repressor (214 aa).

The H-T-H motif DNA-binding region spans 26–46; sequence VREIGEAVGLSSSSTVHSYLK. Residues Ser138 and Lys175 each act as for autocatalytic cleavage activity in the active site.

Belongs to the peptidase S24 family. Homodimer.

The enzyme catalyses Hydrolysis of Ala-|-Gly bond in repressor LexA.. Represses a number of genes involved in the response to DNA damage (SOS response), including recA and lexA. In the presence of single-stranded DNA, RecA interacts with LexA causing an autocatalytic cleavage which disrupts the DNA-binding part of LexA, leading to derepression of the SOS regulon and eventually DNA repair. The sequence is that of LexA repressor from Desulforamulus reducens (strain ATCC BAA-1160 / DSM 100696 / MI-1) (Desulfotomaculum reducens).